Here is a 275-residue protein sequence, read N- to C-terminus: NH(3)-dependent NAD(+) synthetase (275 aa).

50–57 (GISGGVDS) serves as a coordination point for ATP. Aspartate 56 contacts Mg(2+). Residue arginine 147 participates in deamido-NAD(+) binding. Position 167 (threonine 167) interacts with ATP. A Mg(2+)-binding site is contributed by glutamate 172. Deamido-NAD(+)-binding residues include lysine 180 and aspartate 187. ATP contacts are provided by lysine 196 and threonine 218. A deamido-NAD(+)-binding site is contributed by 267–268 (HK).

Belongs to the NAD synthetase family. Homodimer.

It carries out the reaction deamido-NAD(+) + NH4(+) + ATP = AMP + diphosphate + NAD(+) + H(+). The protein operates within cofactor biosynthesis; NAD(+) biosynthesis; NAD(+) from deamido-NAD(+) (ammonia route): step 1/1. Functionally, catalyzes the ATP-dependent amidation of deamido-NAD to form NAD. Uses ammonia as a nitrogen source. The chain is NH(3)-dependent NAD(+) synthetase from Pseudomonas aeruginosa (strain LESB58).